The following is a 346-amino-acid chain: Elongation factor Ts (346 aa).

Positions 80–83 (TDFV) are involved in Mg(2+) ion dislocation from EF-Tu.

It belongs to the EF-Ts family.

The protein resides in the cytoplasm. Associates with the EF-Tu.GDP complex and induces the exchange of GDP to GTP. It remains bound to the aminoacyl-tRNA.EF-Tu.GTP complex up to the GTP hydrolysis stage on the ribosome. This chain is Elongation factor Ts (tsf), found in Streptococcus pneumoniae (strain ATCC BAA-255 / R6).